Consider the following 308-residue polypeptide: NAD-dependent protein deacylase SIR4 (308 aa).

The transit peptide at 1–16 (MAATKLHPALRNAIRA) directs the protein to the mitochondrion. A Deacetylase sirtuin-type domain is found at 28-308 (TFDVQEGIKL…EVLPAALRQL (281 aa)). Residues 53 to 73 (GAGI…RPPH) and 129 to 132 (QNVD) each bind NAD(+). Residue H147 is the Proton acceptor of the active site. Positions 155, 158, 211, and 214 each coordinate Zn(2+). NAD(+) is bound by residues 251–253 (GTS), 277–279 (NSG), and I297.

Belongs to the sirtuin family. Class II subfamily. It depends on Zn(2+) as a cofactor.

It is found in the mitochondrion matrix. The catalysed reaction is N(6)-acetyl-L-lysyl-[protein] + NAD(+) + H2O = 2''-O-acetyl-ADP-D-ribose + nicotinamide + L-lysyl-[protein]. NAD-dependent protein deacylase. Catalyzes the NAD-dependent hydrolysis of acyl groups from lysine residues. This chain is NAD-dependent protein deacylase SIR4, found in Monosiga brevicollis (Choanoflagellate).